The following is a 282-amino-acid chain: Putative 1-acyl-sn-glycerol-3-phosphate acyltransferase acl-2 (282 aa).

The next 2 membrane-spanning stretches (helical) occupy residues 4–24 and 32–52; these read FWSI…NIST and ISFY…TMIP. An HXXXXD motif motif is present at residues 98–103; that stretch reads HQSSLD. Residues 122–142 traverse the membrane as a helical segment; that stretch reads ILAYVPFFNLGAYFSNTIFID.

Belongs to the 1-acyl-sn-glycerol-3-phosphate acyltransferase family.

The protein resides in the membrane. The catalysed reaction is a 1-acyl-sn-glycero-3-phosphate + an acyl-CoA = a 1,2-diacyl-sn-glycero-3-phosphate + CoA. It functions in the pathway phospholipid metabolism; CDP-diacylglycerol biosynthesis; CDP-diacylglycerol from sn-glycerol 3-phosphate: step 2/3. In terms of biological role, converts lysophosphatidic acid (LPA) into phosphatidic acid by incorporating an acyl moiety at the sn-2 position of the glycerol backbone. The chain is Putative 1-acyl-sn-glycerol-3-phosphate acyltransferase acl-2 (acl-2) from Caenorhabditis elegans.